A 103-amino-acid chain; its full sequence is UPF0134 protein MPN_484 (103 aa).

It belongs to the UPF0134 family.

The protein is UPF0134 protein MPN_484 of Mycoplasma pneumoniae (strain ATCC 29342 / M129 / Subtype 1) (Mycoplasmoides pneumoniae).